A 45-amino-acid polypeptide reads, in one-letter code: Cytochrome b559 subunit beta (45 aa).

Residues 20 to 36 (WLAVHTLGVPTVFFLGA) traverse the membrane as a helical segment. Histidine 24 is a binding site for heme.

It belongs to the PsbE/PsbF family. As to quaternary structure, heterodimer of an alpha subunit and a beta subunit. PSII is composed of 1 copy each of membrane proteins PsbA, PsbB, PsbC, PsbD, PsbE, PsbF, PsbH, PsbI, PsbJ, PsbK, PsbL, PsbM, PsbT, PsbX, PsbY, PsbZ, Psb30/Ycf12, peripheral proteins PsbO, CyanoQ (PsbQ), PsbU, PsbV and a large number of cofactors. It forms dimeric complexes. Heme b serves as cofactor.

Its subcellular location is the cellular thylakoid membrane. This b-type cytochrome is tightly associated with the reaction center of photosystem II (PSII). PSII is a light-driven water:plastoquinone oxidoreductase that uses light energy to abstract electrons from H(2)O, generating O(2) and a proton gradient subsequently used for ATP formation. It consists of a core antenna complex that captures photons, and an electron transfer chain that converts photonic excitation into a charge separation. This chain is Cytochrome b559 subunit beta, found in Nostoc punctiforme (strain ATCC 29133 / PCC 73102).